We begin with the raw amino-acid sequence, 84 residues long: UPF0410 protein YmgE (84 aa).

Helical transmembrane passes span 1 to 21 (MGII…KLIM), 27 to 47 (GGFF…GWLA), and 58 to 78 (GFNL…LGVF).

This sequence belongs to the UPF0410 family.

The protein localises to the cell inner membrane. In Escherichia coli O127:H6 (strain E2348/69 / EPEC), this protein is UPF0410 protein YmgE (ymgE).